Consider the following 404-residue polypeptide: Cysteine desulfurase IscS (404 aa).

Pyridoxal 5'-phosphate-binding positions include 75–76, asparagine 155, glutamine 183, and 203–205; these read AT and SAH. Lysine 206 carries the post-translational modification N6-(pyridoxal phosphate)lysine. Threonine 243 contacts pyridoxal 5'-phosphate. The active-site Cysteine persulfide intermediate is cysteine 328. Cysteine 328 contacts [2Fe-2S] cluster.

Belongs to the class-V pyridoxal-phosphate-dependent aminotransferase family. NifS/IscS subfamily. As to quaternary structure, homodimer. Forms a heterotetramer with IscU, interacts with other sulfur acceptors. Pyridoxal 5'-phosphate is required as a cofactor.

It localises to the cytoplasm. It catalyses the reaction (sulfur carrier)-H + L-cysteine = (sulfur carrier)-SH + L-alanine. The protein operates within cofactor biosynthesis; iron-sulfur cluster biosynthesis. Its function is as follows. Master enzyme that delivers sulfur to a number of partners involved in Fe-S cluster assembly, tRNA modification or cofactor biosynthesis. Catalyzes the removal of elemental sulfur atoms from cysteine to produce alanine. Functions as a sulfur delivery protein for Fe-S cluster synthesis onto IscU, an Fe-S scaffold assembly protein, as well as other S acceptor proteins. The protein is Cysteine desulfurase IscS of Pseudomonas aeruginosa (strain LESB58).